The chain runs to 270 residues: Interleukin-1 alpha (270 aa).

A propeptide spanning residues 1–114 is cleaved from the precursor; it reads MAKVPDLFED…HDLEETIQPR (114 aa). Asn46 carries an N-linked (GlcNAc...) asparagine glycan. Position 85 is an N6-acetyllysine (Lys85). A nuclear localization signal (NLS) region spans residues 85–89; that stretch reads KKRRL. At Ser90 the chain carries Phosphoserine. Asn139 is a glycosylation site (N-linked (GlcNAc...) asparagine).

Belongs to the IL-1 family. As to quaternary structure, monomer. Interacts with TMED10; the interaction mediates the translocation from the cytoplasm into the ERGIC (endoplasmic reticulum-Golgi intermediate compartment) and thereby secretion. Interacts with IL1R1. Interacts with S100A13; this interaction is the first step in the export of IL1A, followed by direct translocation of this complex across the plasma membrane. Acetylated within its nuclear localization sequence, which impacts subcellular localization. In terms of processing, proteolytic processed by CAPN1 in a calcium-dependent manner. Cleavage from 31 kDa precursor to 18 kDa biologically active molecules. Post-translationally, phosphorylated. Phosphorylation greatly enhances susceptibility to digestion and promotes the conversion of pre-IL1A alpha to the biologically active IL1A.

Its subcellular location is the nucleus. It localises to the cytoplasm. It is found in the secreted. Functionally, cytokine constitutively present intracellularly in nearly all resting non-hematopoietic cells that plays an important role in inflammation and bridges the innate and adaptive immune systems. After binding to its receptor IL1R1 together with its accessory protein IL1RAP, forms the high affinity interleukin-1 receptor complex. Signaling involves the recruitment of adapter molecules such as MYD88, IRAK1 or IRAK4. In turn, mediates the activation of NF-kappa-B and the three MAPK pathways p38, p42/p44 and JNK pathways. Within the cell, acts as an alarmin and cell death results in its liberation in the extracellular space after disruption of the cell membrane to induce inflammation and alert the host to injury or damage. In addition to its role as a danger signal, which occurs when the cytokine is passively released by cell necrosis, directly senses DNA damage and acts as signal for genotoxic stress without loss of cell integrity. The sequence is that of Interleukin-1 alpha from Rattus norvegicus (Rat).